A 385-amino-acid chain; its full sequence is Methionine aminopeptidase 1 (385 aa).

Residues threonine 6–lysine 59 form a C6H2-type zinc finger. Cysteine 9, cysteine 14, cysteine 22, cysteine 25, cysteine 36, cysteine 40, histidine 48, and histidine 52 together coordinate Zn(2+). Residue histidine 203 participates in a protein binding. Residues aspartate 220, aspartate 231, and histidine 294 each coordinate Zn(2+). Residue histidine 301 coordinates a protein. Glutamate 327 and glutamate 358 together coordinate Zn(2+).

It belongs to the peptidase M24A family. Methionine aminopeptidase type 1 subfamily. In terms of assembly, associates with the 60S ribosomal subunit of the 80S translational complex. It depends on Zn(2+) as a cofactor. The cofactor is Co(2+). Mn(2+) is required as a cofactor. Fe(2+) serves as cofactor.

The protein localises to the cytoplasm. It catalyses the reaction Release of N-terminal amino acids, preferentially methionine, from peptides and arylamides.. Cotranslationally removes the N-terminal methionine from nascent proteins. The N-terminal methionine is often cleaved when the second residue in the primary sequence is small and uncharged (Met-Ala-, Cys, Gly, Pro, Ser, Thr, or Val). This chain is Methionine aminopeptidase 1 (METAP1), found in Gallus gallus (Chicken).